The following is a 232-amino-acid chain: MMKKPIQVFLAGDSTVSDCPPHEAPMAGWGQVFGQLFSEGVLVRNHAKGGASTNSFVEEGRLQAIAEHITQGDYLLIQFGHNDQKPRGTKPYSTFQQFLTLFADTAREKGAHPVFVTSVQRRRFDENGRIEHTLGEYPDAMKALAKELDVPVIDLLAKTKVLYEAYGPEESKRLFVWFQPNEHPNYPDGIEDNTHFSEKGAMEVAKLVAEGIEELGLPLKDHLVSREGKEHV.

The active-site Nucleophile is Ser14. Active-site residues include Glu191 and His195.

It belongs to the 'GDSL' lipolytic enzyme family. Monomer.

Almost completely inhibited by diethylpyrocarbonate at 5 mM and completely inhibited by phenylmethylsulfonyl fluoride (PMSF) at 50 mM. Dimethyl phosphite achieves only a 53% inhibition. Also inhibited by metal ions (magnesium, manganese and calcium) and chelating agent (EDTA) at the same level. Its function is as follows. May play a role in the degradation of type I rhamnogalacturonan derived from plant cell walls. This enzyme has a broad substrate specificity, and shows strong preference for glucose pentaacetate, beta-naphthylacetate, and p-nitrophenyl acetate (pNPA). Also active toward acetylated xylan. The polypeptide is Rhamnogalacturonan acetylesterase RhgT (rhgT) (Bacillus subtilis (strain 168)).